A 259-amino-acid chain; its full sequence is Complement factor D (259 aa).

An N-terminal signal peptide occupies residues 1–21; sequence MADRSGHLAALILLGAAVCVA. Residues 22-26 constitute a propeptide, activation peptide; the sequence is QPRGR. Positions 27–254 constitute a Peptidase S1 domain; the sequence is ILGGQEAKSH…YVAWIDGVMA (228 aa). A disulfide bond links Cys-52 and Cys-68. Catalysis depends on charge relay system residues His-67 and Asp-115. Disulfide bonds link Cys-149/Cys-215, Cys-180/Cys-196, and Cys-205/Cys-230. The active-site Charge relay system is the Ser-209. Residues 224–228 are self-inhibitor loop; it reads TSGSR.

Belongs to the peptidase S1 family. In terms of processing, CFD is activated by the removal of 5 residues at the N-terminus, named activation peptide, by the MASP-3 isoform of MASP1.

The protein localises to the secreted. It carries out the reaction Selective cleavage of Arg-|-Lys bond in complement factor B when in complex with complement subcomponent C3b or with cobra venom factor.. Circulates in plasma in a mature but self-inhibited form. Activated by factor B (CFB), which displaces the self-inhibition loop. Associates with CFB complexed with complement C3b. Functionally, serine protease that initiates the alternative pathway of the complement system, a cascade of proteins that leads to phagocytosis and breakdown of pathogens and signaling that strengthens the adaptive immune system. In contrast to other complement pathways (classical, lectin and GZMK) that are directly activated by pathogens or antigen-antibody complexes, the alternative complement pathway is initiated by the spontaneous hydrolysis of complement C3. The alternative complement pathway acts as an amplification loop that enhances complement activation by mediating the formation of C3 and C5 convertases. Activated CFD cleaves factor B (CFB) when the latter is complexed with complement C3b, activating the C3 convertase of the alternative pathway. The protein is Complement factor D (CFD) of Sus scrofa (Pig).